The following is a 432-amino-acid chain: Putative D-alanyl-D-alanine carboxypeptidase (432 aa).

The helical; Signal-anchor transmembrane segment at 7–25 (ATVLLTFSLSAFAVEYPVL) threads the bilayer.

The protein belongs to the peptidase S12 family. YfeW subfamily.

The protein resides in the cell inner membrane. It carries out the reaction Preferential cleavage: (Ac)2-L-Lys-D-Ala-|-D-Ala. Also transpeptidation of peptidyl-alanyl moieties that are N-acyl substituents of D-alanine.. In Salmonella gallinarum (strain 287/91 / NCTC 13346), this protein is Putative D-alanyl-D-alanine carboxypeptidase.